A 138-amino-acid chain; its full sequence is MKISTKGRYGLTIMIELAKKHGEGPTSLKSIAQTNNLSEHYLEQLVSPLRNAGLVKSIRGAYGGYVLGSEPDAITAGDIIRVLEGPISPVEVLEDEEPAKRELWIRIRDAVKEVLDSTTLEDLASYTDGEQEAYMFYI.

The 124-residue stretch at 2 to 125 folds into the HTH rrf2-type domain; it reads KISTKGRYGL…DSTTLEDLAS (124 aa). A DNA-binding region (H-T-H motif) is located at residues 28-51; that stretch reads LKSIAQTNNLSEHYLEQLVSPLRN.

As to quaternary structure, homodimer. Forms homotetramers at higher concentrations of protein. Forms CymR(2):CysK(2) or CymR(4):CysK(4) complexes in the absence of O-acetylserine.

Functionally, master repressor of cysteine metabolism in B.subtilis. Controls the expression of genes involved either in cysteine synthesis from sulfide (cysK), sulfonates (ssu), or methionine (mccAB) or in cystine uptake (tcyP). Activity of CymR is positively regulated by CysK in response to cysteine availability. When cysteine is present, the pool of O-acetylserine (OAS) is low, which leads to the formation of a CymR-CysK complex and transcriptional repression of the CymR regulon occurs. In the absence of cysteine, the OAS pool is high and the CymR-CysK complex is mostly dissociated, leading to a faster dissociation of CymR from its DNA targets and the lifting of CymR-dependent repression. The chain is HTH-type transcriptional regulator CymR (cymR) from Bacillus subtilis (strain 168).